Here is a 140-residue protein sequence, read N- to C-terminus: Protein ripply1 (140 aa).

The WRPW motif; required for gro2-binding signature appears at 28-31 (WRPW). The interval 71–106 (HPVRLYWPRSKSFDYLFSDGEALLRNFPVQATINFY) is ripply homology domain. Positions 107 to 126 (DESDSEDEEESCDEDDESDV) are disordered.

It belongs to the ripply family. As to quaternary structure, interacts with gro2 via the WRPW motif. In terms of tissue distribution, expressed in the embryonic anterior presomitic mesoderm and in newly formed somites.

It localises to the nucleus. Its function is as follows. Plays a role in somitogenesis. Essential for transcriptional repression of the segmental patterning genes, thus terminating the segmentation program in the presomitic mesoderm, and also required for the maintenance of rostrocaudal polarity in somites. This Danio rerio (Zebrafish) protein is Protein ripply1.